The sequence spans 235 residues: Probable tetraspanin tspB (235 aa).

The Cytoplasmic segment spans residues 1 to 23 (MVDTTNLIPNTPRYLKVPLIAFN). The chain crosses the membrane as a helical span at residues 24–44 (TILWVLGLVLVIIGSIGVSFF). Residues 45-68 (SNFKDFTKVSKASAALSNLTTGAP) are Extracellular-facing. N-linked (GlcNAc...) asparagine glycosylation occurs at Asn-62. Residues 69–89 (AGVLVIGIFFVILTVIGCFVA) form a helical membrane-spanning segment. Topologically, residues 90–93 (GKEK) are cytoplasmic. The helical transmembrane segment at 94–114 (LVGLVIYTMLMLIILVALIGV) threads the bilayer. The Extracellular portion of the chain corresponds to 115-200 (GGKALTLHND…ISSNLYLVGA (86 aa)). 2 N-linked (GlcNAc...) asparagine glycosylation sites follow: Asn-143 and Asn-159. The helical transmembrane segment at 201-221 (AAVSIGVIEFICMLFALFLII) threads the bilayer. Residues 222–235 (RICRAPRTKSYDYQ) lie on the Cytoplasmic side of the membrane.

This sequence belongs to the tetraspanin (TM4SF) family.

Its subcellular location is the membrane. In Dictyostelium discoideum (Social amoeba), this protein is Probable tetraspanin tspB (tspB).